A 131-amino-acid polypeptide reads, in one-letter code: Holo-[acyl-carrier-protein] synthase (131 aa).

The Mg(2+) site is built by D8 and E59.

Belongs to the P-Pant transferase superfamily. AcpS family. Requires Mg(2+) as cofactor.

It localises to the cytoplasm. The catalysed reaction is apo-[ACP] + CoA = holo-[ACP] + adenosine 3',5'-bisphosphate + H(+). Its function is as follows. Transfers the 4'-phosphopantetheine moiety from coenzyme A to a Ser of acyl-carrier-protein. The sequence is that of Holo-[acyl-carrier-protein] synthase from Orientia tsutsugamushi (strain Ikeda) (Rickettsia tsutsugamushi).